Consider the following 470-residue polypeptide: Glutamyl-tRNA(Gln) amidotransferase subunit A (470 aa).

Residues K71 and S146 each act as charge relay system in the active site. The active-site Acyl-ester intermediate is the S170.

Belongs to the amidase family. GatA subfamily. Heterotrimer of A, B and C subunits.

The enzyme catalyses L-glutamyl-tRNA(Gln) + L-glutamine + ATP + H2O = L-glutaminyl-tRNA(Gln) + L-glutamate + ADP + phosphate + H(+). In terms of biological role, allows the formation of correctly charged Gln-tRNA(Gln) through the transamidation of misacylated Glu-tRNA(Gln) in organisms which lack glutaminyl-tRNA synthetase. The reaction takes place in the presence of glutamine and ATP through an activated gamma-phospho-Glu-tRNA(Gln). This chain is Glutamyl-tRNA(Gln) amidotransferase subunit A, found in Akkermansia muciniphila (strain ATCC BAA-835 / DSM 22959 / JCM 33894 / BCRC 81048 / CCUG 64013 / CIP 107961 / Muc).